The following is a 122-amino-acid chain: Acidic phospholipase A2 BpirPLA2-I (122 aa).

Cystine bridges form between Cys-26-Cys-115, Cys-28-Cys-44, Cys-43-Cys-95, Cys-49-Cys-122, Cys-50-Cys-88, Cys-57-Cys-81, and Cys-75-Cys-86. Ca(2+) is bound by residues Tyr-27, Gly-29, and Gly-31. The active site involves His-47. Residue Asp-48 coordinates Ca(2+). The active site involves Asp-89. Positions 105–117 match the Antiplatelet activity motif; the sequence is IKYWFYGAKNCQE.

It belongs to the phospholipase A2 family. Group II subfamily. D49 sub-subfamily. The cofactor is Ca(2+). As to expression, expressed by the venom gland.

It is found in the secreted. The catalysed reaction is a 1,2-diacyl-sn-glycero-3-phosphocholine + H2O = a 1-acyl-sn-glycero-3-phosphocholine + a fatty acid + H(+). Its activity is regulated as follows. Inhibited by EDTA and p-bromophenacyl bromide (BPB). Snake venom phospholipase A2 (PLA2) that inhibits collagen/ADP-induced platelet aggregation, and induces hypotension in rats (activity abolished in the presence of p-bromophenacyl bromide). PLA2 catalyzes the calcium-dependent hydrolysis of the 2-acyl groups in 3-sn-phosphoglycerides. This is Acidic phospholipase A2 BpirPLA2-I from Bothrops pirajai (Piraja's lancehead).